Consider the following 1077-residue polypeptide: Semaphorin-5A (1077 aa).

The first 21 residues, 1-21 (MKGACILAWLFSSLGVWRLAR), serve as a signal peptide directing secretion. The Extracellular segment spans residues 22-971 (PETQDPAKCQ…RCGEFNMFHM (950 aa)). The Sema domain occupies 35–484 (HPVVSYKEIG…LQEHVAKIPL (450 aa)). Cystine bridges form between Cys-104-Cys-114 and Cys-131-Cys-140. N-linked (GlcNAc...) asparagine glycans are attached at residues Asn-147, Asn-168, Asn-227, and Asn-277. Intrachain disulfides connect Cys-254–Cys-357 and Cys-278–Cys-320. Asn-323 and Asn-367 each carry an N-linked (GlcNAc...) asparagine glycan. Disulfide bonds link Cys-487-Cys-504 and Cys-496-Cys-513. 2 N-linked (GlcNAc...) asparagine glycosylation sites follow: Asn-536 and Asn-591. TSP type-1 domains follow at residues 540-593 (DGSF…TNCS), 595-651 (NGGW…LLCP), 653-702 (HVFW…NACP), 707-765 (TTPW…GCST), 784-839 (NGAW…LPCP), 841-896 (DGVW…QTCP), and 897-944 (ESWS…VFDS). 6 disulfides stabilise this stretch: Cys-607–Cys-644, Cys-611–Cys-650, Cys-622–Cys-634, Cys-665–Cys-696, Cys-669–Cys-701, and Cys-680–Cys-686. Asn-717 carries N-linked (GlcNAc...) asparagine glycosylation. 6 disulfide bridges follow: Cys-796–Cys-833, Cys-800–Cys-838, Cys-811–Cys-823, Cys-853–Cys-890, Cys-857–Cys-895, and Cys-868–Cys-880. Asn-933 is a glycosylation site (N-linked (GlcNAc...) asparagine). The helical transmembrane segment at 972 to 992 (FHMMAVGLSSSILGCLLTLLV) threads the bilayer. Topologically, residues 993 to 1077 (YTYCQRYQQQ…FTDLNNYDEY (85 aa)) are cytoplasmic.

Belongs to the semaphorin family. In terms of assembly, binds PLXNB3. As to expression, in adult, detected in liver, brain, kidney, heart, lung and spleen.

The protein resides in the membrane. Bifunctional axonal guidance cue regulated by sulfated proteoglycans; attractive effects result from interactions with heparan sulfate proteoglycans (HSPGs), while the inhibitory effects depend on interactions with chondroitin sulfate proteoglycans (CSPGs). Ligand for receptor PLXNB3. In glioma cells, SEMA5A stimulation of PLXNB3 results in the disassembly of F-actin stress fibers, disruption of focal adhesions and cellular collapse as well as inhibition of cell migration and invasion through ARHGDIA-mediated inactivation of RAC1. May promote angiogenesis by increasing endothelial cell proliferation and migration and inhibiting apoptosis. The protein is Semaphorin-5A (Sema5a) of Mus musculus (Mouse).